The chain runs to 486 residues: Glutamyl-tRNA(Gln) amidotransferase subunit A (486 aa).

Residues K75 and S150 each act as charge relay system in the active site. S174 serves as the catalytic Acyl-ester intermediate.

The protein belongs to the amidase family. GatA subfamily. As to quaternary structure, heterotrimer of A, B and C subunits.

It catalyses the reaction L-glutamyl-tRNA(Gln) + L-glutamine + ATP + H2O = L-glutaminyl-tRNA(Gln) + L-glutamate + ADP + phosphate + H(+). In terms of biological role, allows the formation of correctly charged Gln-tRNA(Gln) through the transamidation of misacylated Glu-tRNA(Gln) in organisms which lack glutaminyl-tRNA synthetase. The reaction takes place in the presence of glutamine and ATP through an activated gamma-phospho-Glu-tRNA(Gln). In Nostoc punctiforme (strain ATCC 29133 / PCC 73102), this protein is Glutamyl-tRNA(Gln) amidotransferase subunit A.